The sequence spans 401 residues: Formate-dependent phosphoribosylglycinamide formyltransferase (401 aa).

N(1)-(5-phospho-beta-D-ribosyl)glycinamide is bound by residues 22–23 (EL) and Glu82. ATP-binding positions include Arg115, Lys157, 162 to 167 (SSGKGQ), 197 to 200 (EGFI), and Glu205. The region spanning 120-315 (RLAAESLGLP…EFELHARAIL (196 aa)) is the ATP-grasp domain. Residues Glu274 and Glu286 each coordinate Mg(2+). N(1)-(5-phospho-beta-D-ribosyl)glycinamide-binding positions include Asp293, Lys362, and 369–370 (RR).

This sequence belongs to the PurK/PurT family. Homodimer.

It carries out the reaction N(1)-(5-phospho-beta-D-ribosyl)glycinamide + formate + ATP = N(2)-formyl-N(1)-(5-phospho-beta-D-ribosyl)glycinamide + ADP + phosphate + H(+). It functions in the pathway purine metabolism; IMP biosynthesis via de novo pathway; N(2)-formyl-N(1)-(5-phospho-D-ribosyl)glycinamide from N(1)-(5-phospho-D-ribosyl)glycinamide (formate route): step 1/1. Its function is as follows. Involved in the de novo purine biosynthesis. Catalyzes the transfer of formate to 5-phospho-ribosyl-glycinamide (GAR), producing 5-phospho-ribosyl-N-formylglycinamide (FGAR). Formate is provided by PurU via hydrolysis of 10-formyl-tetrahydrofolate. The protein is Formate-dependent phosphoribosylglycinamide formyltransferase of Cupriavidus taiwanensis (strain DSM 17343 / BCRC 17206 / CCUG 44338 / CIP 107171 / LMG 19424 / R1) (Ralstonia taiwanensis (strain LMG 19424)).